Reading from the N-terminus, the 236-residue chain is Small ribosomal subunit protein uS3 (236 aa).

Positions 39-107 constitute a KH type-2 domain; that stretch reads IRKFLKREMY…EVFINIKEAK (69 aa). The segment covering 214–229 has biased composition (basic and acidic residues); sequence PEKKEESKSGDKEVRS. Residues 214–236 are disordered; sequence PEKKEESKSGDKEVRSKSRRGRQ.

This sequence belongs to the universal ribosomal protein uS3 family. In terms of assembly, part of the 30S ribosomal subunit. Forms a tight complex with proteins S10 and S14.

In terms of biological role, binds the lower part of the 30S subunit head. Binds mRNA in the 70S ribosome, positioning it for translation. The polypeptide is Small ribosomal subunit protein uS3 (Helicobacter hepaticus (strain ATCC 51449 / 3B1)).